Here is a 254-residue protein sequence, read N- to C-terminus: 3-deoxy-manno-octulosonate cytidylyltransferase (254 aa).

The protein belongs to the KdsB family.

Its subcellular location is the cytoplasm. It carries out the reaction 3-deoxy-alpha-D-manno-oct-2-ulosonate + CTP = CMP-3-deoxy-beta-D-manno-octulosonate + diphosphate. The protein operates within nucleotide-sugar biosynthesis; CMP-3-deoxy-D-manno-octulosonate biosynthesis; CMP-3-deoxy-D-manno-octulosonate from 3-deoxy-D-manno-octulosonate and CTP: step 1/1. It participates in bacterial outer membrane biogenesis; lipopolysaccharide biosynthesis. Activates KDO (a required 8-carbon sugar) for incorporation into bacterial lipopolysaccharide in Gram-negative bacteria. The polypeptide is 3-deoxy-manno-octulosonate cytidylyltransferase (Chlamydia abortus (strain DSM 27085 / S26/3) (Chlamydophila abortus)).